Consider the following 734-residue polypeptide: Photosystem I P700 chlorophyll a apoprotein A2 (734 aa).

The next 8 membrane-spanning stretches (helical) occupy residues 46-69, 135-158, 175-199, 273-291, 330-353, 369-395, 417-439, and 517-535; these read IFASHFGQLAIIFLWTSGNLFHVA, LYTGALFLLFLSAISLIAGWLHLQ, LNHHLSGLFGVSSLAWTGHLVHVAI, IAHHHLAIAFLFLVAGHMY, IHFQLGLALASLGVITSLVAQHMY, AALYTHHQYIAGFIMTGAFAHGAIFFI, AIISHLSWVSLFLGFHTLGLYVH, and FLVHHAIALGLHTTTLILV. [4Fe-4S] cluster-binding residues include Cys-559 and Cys-568. 2 consecutive transmembrane segments (helical) span residues 575–596 and 643–665; these read AFYLAVFWMLNTIGWVTFYWHW and LSVWAWMFLFGHLVWATGFMFLI. Chlorophyll a contacts are provided by His-654, Met-662, and Tyr-670. Trp-671 is a binding site for phylloquinone. A helical membrane pass occupies residues 707–727; that stretch reads LVGLAHFSVGYIFTYAAFLIA.

The protein belongs to the PsaA/PsaB family. In terms of assembly, the PsaA/B heterodimer binds the P700 chlorophyll special pair and subsequent electron acceptors. PSI consists of a core antenna complex that captures photons, and an electron transfer chain that converts photonic excitation into a charge separation. The eukaryotic PSI reaction center is composed of at least 11 subunits. P700 is a chlorophyll a/chlorophyll a' dimer, A0 is one or more chlorophyll a, A1 is one or both phylloquinones and FX is a shared 4Fe-4S iron-sulfur center. serves as cofactor.

It localises to the plastid. It is found in the chloroplast thylakoid membrane. It carries out the reaction reduced [plastocyanin] + hnu + oxidized [2Fe-2S]-[ferredoxin] = oxidized [plastocyanin] + reduced [2Fe-2S]-[ferredoxin]. Functionally, psaA and PsaB bind P700, the primary electron donor of photosystem I (PSI), as well as the electron acceptors A0, A1 and FX. PSI is a plastocyanin-ferredoxin oxidoreductase, converting photonic excitation into a charge separation, which transfers an electron from the donor P700 chlorophyll pair to the spectroscopically characterized acceptors A0, A1, FX, FA and FB in turn. Oxidized P700 is reduced on the lumenal side of the thylakoid membrane by plastocyanin. The chain is Photosystem I P700 chlorophyll a apoprotein A2 from Pelargonium hortorum (Common geranium).